We begin with the raw amino-acid sequence, 100 residues long: Small ribosomal subunit protein uS14c (100 aa).

The protein belongs to the universal ribosomal protein uS14 family. In terms of assembly, part of the 30S ribosomal subunit.

The protein localises to the plastid. It localises to the chloroplast. Its function is as follows. Binds 16S rRNA, required for the assembly of 30S particles. This Chloranthus spicatus (Chulantree) protein is Small ribosomal subunit protein uS14c.